A 356-amino-acid polypeptide reads, in one-letter code: 4-hydroxy-2-oxovalerate aldolase (356 aa).

One can recognise a Pyruvate carboxyltransferase domain in the interval 7–257 (PRVTDTTLRD…NPGLDVFKLM (251 aa)). Substrate is bound at residue 15–16 (RD). D16 contacts Mn(2+). The active-site Proton acceptor is H19. Positions 169 and 196 each coordinate substrate. Positions 196 and 198 each coordinate Mn(2+). Y287 contacts substrate.

Belongs to the 4-hydroxy-2-oxovalerate aldolase family.

It carries out the reaction (S)-4-hydroxy-2-oxopentanoate = acetaldehyde + pyruvate. This Thermomicrobium roseum (strain ATCC 27502 / DSM 5159 / P-2) protein is 4-hydroxy-2-oxovalerate aldolase.